The sequence spans 376 residues: N-acetyldiaminopimelate deacetylase (376 aa).

D70 is an active-site residue. Catalysis depends on E129, which acts as the Proton acceptor.

Belongs to the peptidase M20A family. N-acetyldiaminopimelate deacetylase subfamily.

The catalysed reaction is N-acetyl-(2S,6S)-2,6-diaminopimelate + H2O = (2S,6S)-2,6-diaminopimelate + acetate. The protein operates within amino-acid biosynthesis; L-lysine biosynthesis via DAP pathway; LL-2,6-diaminopimelate from (S)-tetrahydrodipicolinate (acetylase route): step 3/3. Functionally, catalyzes the conversion of N-acetyl-diaminopimelate to diaminopimelate and acetate. In Bacillus pumilus (strain SAFR-032), this protein is N-acetyldiaminopimelate deacetylase.